The sequence spans 348 residues: Delta(6)-protoilludene synthase 18 (348 aa).

Residues Asp-87, Asn-223, Ser-227, and Glu-231 each contribute to the Mg(2+) site. The short motif at 87–91 (DEYTD) is the DDXXD motif element. The short motif at 223–231 (NDLVSYNRE) is the NSE/DTE motif element. Arg-311 and Tyr-312 together coordinate (2E,6E)-farnesyl diphosphate.

The protein belongs to the terpene synthase family. Requires Mg(2+) as cofactor.

The enzyme catalyses (2E,6E)-farnesyl diphosphate = Delta(6)-protoilludene + diphosphate. Terpene cyclase that catalyzes the cyclization of farnesyl diphosphate (FPP) to delta(6)-protoilludene. The polypeptide is Delta(6)-protoilludene synthase 18 (Postia placenta (strain ATCC 44394 / Madison 698-R) (Brown rot fungus)).